A 450-amino-acid chain; its full sequence is MSHSACPKPATARHSQALTGEIRIPGDKSISHRSFMFGGLASGKTRITGLLEGEDVINTGRAMQAMGARIRKEGDVWIINGVGNGCLLQPEAPLDFGNAGTGARLTMGLVGTYDMKTSFIGDASLSKRPMGRVLNPLREMGVQVEAAEGDRMPLTLIGPRTANPIAYRVPMASAQVKSAVLLAGLNTPGVTTVIEPVMTRDHTEKMLQGFGADLTVETDKDGVRHIRIVGQGKLTGQTIDVPGDPSSTAFPLVAALLVEGSEVTIRNVLMNPTRTGLILTLQEMGADIEIIDPRLAGGEDVADLRVKASKLKGVVVPPERAPSMIDEYPVLAIAASFAEGETVMDGLDELRVKESDRLAAVARGLEANGVDCTEGEMSLTVRGRPGGKGLGGGTVATHLDHRIAMSFLVMGLASEKPVTVDDSTMIATSFPEFMGMMAGLGAKIAESGAE.

Residues lysine 28, serine 29, and arginine 33 each coordinate 3-phosphoshikimate. Lysine 28 serves as a coordination point for phosphoenolpyruvate. Residues glycine 100 and arginine 128 each coordinate phosphoenolpyruvate. Serine 173, glutamine 175, aspartate 326, and lysine 353 together coordinate 3-phosphoshikimate. Glutamine 175 is a binding site for phosphoenolpyruvate. The Proton acceptor role is filled by aspartate 326. Phosphoenolpyruvate is bound by residues arginine 357 and arginine 402.

It belongs to the EPSP synthase family. As to quaternary structure, monomer.

It is found in the cytoplasm. The catalysed reaction is 3-phosphoshikimate + phosphoenolpyruvate = 5-O-(1-carboxyvinyl)-3-phosphoshikimate + phosphate. It functions in the pathway metabolic intermediate biosynthesis; chorismate biosynthesis; chorismate from D-erythrose 4-phosphate and phosphoenolpyruvate: step 6/7. In terms of biological role, catalyzes the transfer of the enolpyruvyl moiety of phosphoenolpyruvate (PEP) to the 5-hydroxyl of shikimate-3-phosphate (S3P) to produce enolpyruvyl shikimate-3-phosphate and inorganic phosphate. The polypeptide is 3-phosphoshikimate 1-carboxyvinyltransferase (Brucella abortus (strain S19)).